Reading from the N-terminus, the 622-residue chain is Threonine--tRNA ligase (622 aa).

An editing domain region spans residues 1–136 (MKTLLIHSDY…PLSELSRKIT (136 aa)). The tract at residues 199–498 (PHVKYIKEKE…TLENKPPALP (300 aa)) is catalytic. Residues cysteine 291, histidine 343, and histidine 467 each contribute to the Zn(2+) site.

It belongs to the class-II aminoacyl-tRNA synthetase family. In terms of assembly, homodimer. Requires Zn(2+) as cofactor.

It localises to the cytoplasm. The catalysed reaction is tRNA(Thr) + L-threonine + ATP = L-threonyl-tRNA(Thr) + AMP + diphosphate + H(+). Functionally, catalyzes the attachment of threonine to tRNA(Thr) in a two-step reaction: L-threonine is first activated by ATP to form Thr-AMP and then transferred to the acceptor end of tRNA(Thr). Also edits incorrectly charged L-seryl-tRNA(Thr). The sequence is that of Threonine--tRNA ligase from Methanococcus maripaludis (strain DSM 14266 / JCM 13030 / NBRC 101832 / S2 / LL).